We begin with the raw amino-acid sequence, 1185 residues long: Zinc finger SWIM domain-containing protein 5 (1185 aa).

Residues 1–10 (MADGGEREEL) are compositionally biased toward basic and acidic residues. Disordered stretches follow at residues 1-45 (MADG…GGAG) and 123-153 (AGAA…GSAP). Residues 219–256 (YKVAISFDRCKITSVTCGCGNKDIFYCAHVVALSLYRI) form an SWIM-type zinc finger.

The sequence is that of Zinc finger SWIM domain-containing protein 5 (ZSWIM5) from Homo sapiens (Human).